A 231-amino-acid chain; its full sequence is Ion-translocating oxidoreductase complex subunit E (231 aa).

The next 6 helical transmembrane spans lie at 18 to 38, 39 to 59, 69 to 89, 93 to 113, 127 to 147, and 182 to 202; these read GLVQ…LTNA, LGLG…VSLV, IPVF…FINA, GLYL…VIIG, STFD…VLGA, and TFLL…LIAL.

Belongs to the NqrDE/RnfAE family. In terms of assembly, the complex is composed of six subunits: RnfA, RnfB, RnfC, RnfD, RnfE and RnfG.

The protein resides in the cell inner membrane. In terms of biological role, part of a membrane-bound complex that couples electron transfer with translocation of ions across the membrane. The polypeptide is Ion-translocating oxidoreductase complex subunit E (Shewanella piezotolerans (strain WP3 / JCM 13877)).